The sequence spans 188 residues: dCTP deaminase (188 aa).

Residues 111-116 (KSTYAR), 135-137 (TLE), Q156, Y170, and Q180 contribute to the dCTP site. E137 serves as the catalytic Proton donor/acceptor.

The protein belongs to the dCTP deaminase family. Homotrimer.

The enzyme catalyses dCTP + H2O + H(+) = dUTP + NH4(+). It participates in pyrimidine metabolism; dUMP biosynthesis; dUMP from dCTP (dUTP route): step 1/2. Its function is as follows. Catalyzes the deamination of dCTP to dUTP. This Ectopseudomonas mendocina (strain ymp) (Pseudomonas mendocina) protein is dCTP deaminase.